The chain runs to 548 residues: Probable bifunctional tRNA threonylcarbamoyladenosine biosynthesis protein (548 aa).

The interval 1 to 338 (MRILGIEGTA…FRPDEVAVTW (338 aa)) is kae1. Fe cation contacts are provided by histidine 122 and histidine 126. L-threonylcarbamoyladenylate-binding positions include 143–147 (NASGA), aspartate 175, glycine 188, glutamate 192, and asparagine 271. Residue aspartate 299 participates in Fe cation binding. One can recognise a Protein kinase domain in the interval 349-548 (RMGGDEVQGA…DDIEGRGRYQ (200 aa)). ATP-binding positions include 355-362 (VQGAEATV) and lysine 371. Residues 390–404 (ERTRQEARLTSEARR) are compositionally biased toward basic and acidic residues. The disordered stretch occupies residues 390–413 (ERTRQEARLTSEARRNGVPTPLVR). The active-site Proton acceptor; for kinase activity is aspartate 460.

In the N-terminal section; belongs to the KAE1 / TsaD family. It in the C-terminal section; belongs to the protein kinase superfamily. Tyr protein kinase family. BUD32 subfamily. As to quaternary structure, component of the KEOPS complex that consists of Kae1, Bud32, Cgi121 and Pcc1; the whole complex dimerizes. The cofactor is Fe(2+).

The protein resides in the cytoplasm. It carries out the reaction L-seryl-[protein] + ATP = O-phospho-L-seryl-[protein] + ADP + H(+). The enzyme catalyses L-threonyl-[protein] + ATP = O-phospho-L-threonyl-[protein] + ADP + H(+). The catalysed reaction is L-threonylcarbamoyladenylate + adenosine(37) in tRNA = N(6)-L-threonylcarbamoyladenosine(37) in tRNA + AMP + H(+). Its function is as follows. Required for the formation of a threonylcarbamoyl group on adenosine at position 37 (t(6)A37) in tRNAs that read codons beginning with adenine. Is a component of the KEOPS complex that is probably involved in the transfer of the threonylcarbamoyl moiety of threonylcarbamoyl-AMP (TC-AMP) to the N6 group of A37. The Kae1 domain likely plays a direct catalytic role in this reaction. The Bud32 domain probably displays kinase activity that regulates Kae1 function. This Haloarcula marismortui (strain ATCC 43049 / DSM 3752 / JCM 8966 / VKM B-1809) (Halobacterium marismortui) protein is Probable bifunctional tRNA threonylcarbamoyladenosine biosynthesis protein.